Here is a 178-residue protein sequence, read N- to C-terminus: ATP-dependent protease subunit HslV (178 aa).

The active site involves Thr-5. Positions 161, 164, and 167 each coordinate Na(+).

It belongs to the peptidase T1B family. HslV subfamily. As to quaternary structure, a double ring-shaped homohexamer of HslV is capped on each side by a ring-shaped HslU homohexamer. The assembly of the HslU/HslV complex is dependent on binding of ATP.

The protein localises to the cytoplasm. It catalyses the reaction ATP-dependent cleavage of peptide bonds with broad specificity.. With respect to regulation, allosterically activated by HslU binding. In terms of biological role, protease subunit of a proteasome-like degradation complex believed to be a general protein degrading machinery. In Syntrophomonas wolfei subsp. wolfei (strain DSM 2245B / Goettingen), this protein is ATP-dependent protease subunit HslV.